A 172-amino-acid polypeptide reads, in one-letter code: MSSSQNNNSSWIDWFLGIKGNQFLCRVPTDYVQDTFNQMGLEYFSEILDVILKPVIDSSSGLLYGDEKKWYGMIHARYIRSERGLIAMHRKYLRGDFGSCPNISCYRQNTLPVGLSAVWGKSTVKIHCPRCKSNFHPKSDTQLDGAMFGPSFPDIFFSMLPNLTSPLDDPRT.

Belongs to the casein kinase 2 subunit beta family. In terms of assembly, interacts in vitro with the casein kinase 2 alpha subunit (CkII-alpha). The relevance of such interaction is however unclear in vivo. In terms of tissue distribution, probably not expressed in wild-type flies. In males lacking the Y chromosome, it is testis-specific and constitutes the main component of star-shaped crystals.

Functionally, unknown. In males lacking the Y chromosome, its strong overexpression leads to the appearance of proteinaceous star-shaped crystals in the primary spermatocytes causing meiotic drive, possibly by interfering with normal casein kinase 2 activity. The chain is Stellate protein CG33243 (Ste:CG33243) from Drosophila melanogaster (Fruit fly).